We begin with the raw amino-acid sequence, 248 residues long: 3,4-dihydroxyphthalate decarboxylase (248 aa).

The active-site Proton donor/acceptor is the glutamate 90. A divalent metal cation is bound by residues glutamate 90, histidine 109, histidine 111, and histidine 177.

The protein belongs to the aldolase class II family. The cofactor is a divalent metal cation.

It carries out the reaction 3,4-dihydroxyphthalate + H(+) = 3,4-dihydroxybenzoate + CO2. It functions in the pathway xenobiotic degradation; phthalate degradation. Functionally, catalyzes the decarboxylation of 3,4-dihydroxyphthalate to protocatechuate (3,4-dihydroxybenzoate) during phthalate metabolism. This is 3,4-dihydroxyphthalate decarboxylase from Arthrobacter keyseri.